The following is a 226-amino-acid chain: NAD(P)H-hydrate epimerase (226 aa).

A YjeF N-terminal domain is found at 10–215 (AIELDLDLFE…ALQRKYQLNL (206 aa)). (6S)-NADPHX is bound at residue 58–62 (NNGGD). The K(+) site is built by asparagine 59 and aspartate 123. (6S)-NADPHX is bound by residues 127 to 133 (GFGFKPP) and aspartate 156. Residue serine 159 participates in K(+) binding.

This sequence belongs to the NnrE/AIBP family. Requires K(+) as cofactor.

The enzyme catalyses (6R)-NADHX = (6S)-NADHX. The catalysed reaction is (6R)-NADPHX = (6S)-NADPHX. In terms of biological role, catalyzes the epimerization of the S- and R-forms of NAD(P)HX, a damaged form of NAD(P)H that is a result of enzymatic or heat-dependent hydration. This is a prerequisite for the S-specific NAD(P)H-hydrate dehydratase to allow the repair of both epimers of NAD(P)HX. This chain is NAD(P)H-hydrate epimerase, found in Drosophila pseudoobscura pseudoobscura (Fruit fly).